The chain runs to 300 residues: Tyrosine recombinase XerC (300 aa).

In terms of domain architecture, Core-binding (CB) spans 2–88; the sequence is TQEGQLEKRF…SLRSFYTFLL (87 aa). The 186-residue stretch at 109–294 folds into the Tyr recombinase domain; that stretch reads RLPKFFYSEE…TKEHLKSTYM (186 aa). Residues arginine 150, lysine 174, histidine 246, arginine 249, and histidine 272 contribute to the active site. Catalysis depends on tyrosine 281, which acts as the O-(3'-phospho-DNA)-tyrosine intermediate.

It belongs to the 'phage' integrase family. XerC subfamily. In terms of assembly, forms a cyclic heterotetrameric complex composed of two molecules of XerC and two molecules of XerD.

Its subcellular location is the cytoplasm. Site-specific tyrosine recombinase, which acts by catalyzing the cutting and rejoining of the recombining DNA molecules. The XerC-XerD complex is essential to convert dimers of the bacterial chromosome into monomers to permit their segregation at cell division. It also contributes to the segregational stability of plasmids. The sequence is that of Tyrosine recombinase XerC from Listeria innocua serovar 6a (strain ATCC BAA-680 / CLIP 11262).